We begin with the raw amino-acid sequence, 328 residues long: Beta-ketoacyl-[acyl-carrier-protein] synthase III (328 aa).

Catalysis depends on residues Cys113 and His253. The interval 254 to 258 (QANLR) is ACP-binding. Asn283 is a catalytic residue.

Belongs to the thiolase-like superfamily. FabH family. As to quaternary structure, homodimer.

Its subcellular location is the cytoplasm. The catalysed reaction is malonyl-[ACP] + acetyl-CoA + H(+) = 3-oxobutanoyl-[ACP] + CO2 + CoA. The protein operates within lipid metabolism; fatty acid biosynthesis. In terms of biological role, catalyzes the condensation reaction of fatty acid synthesis by the addition to an acyl acceptor of two carbons from malonyl-ACP. Catalyzes the first condensation reaction which initiates fatty acid synthesis and may therefore play a role in governing the total rate of fatty acid production. Possesses both acetoacetyl-ACP synthase and acetyl transacylase activities. Its substrate specificity determines the biosynthesis of branched-chain and/or straight-chain of fatty acids. The polypeptide is Beta-ketoacyl-[acyl-carrier-protein] synthase III (Fusobacterium nucleatum subsp. nucleatum (strain ATCC 25586 / DSM 15643 / BCRC 10681 / CIP 101130 / JCM 8532 / KCTC 2640 / LMG 13131 / VPI 4355)).